The chain runs to 304 residues: Tyrosine recombinase XerC (304 aa).

The Core-binding (CB) domain maps to 2–88 (ANVKNFLTLF…ALRSFYKFLL (87 aa)). Residues 109–294 (RIPKFLYEKE…SKDMLRKTYM (186 aa)) enclose the Tyr recombinase domain. Active-site residues include Arg149, Lys173, His246, Arg249, and His272. The active-site O-(3'-phospho-DNA)-tyrosine intermediate is Tyr281.

The protein belongs to the 'phage' integrase family. XerC subfamily. In terms of assembly, forms a cyclic heterotetrameric complex composed of two molecules of XerC and two molecules of XerD.

It is found in the cytoplasm. Functionally, site-specific tyrosine recombinase, which acts by catalyzing the cutting and rejoining of the recombining DNA molecules. The XerC-XerD complex is essential to convert dimers of the bacterial chromosome into monomers to permit their segregation at cell division. It also contributes to the segregational stability of plasmids. The protein is Tyrosine recombinase XerC of Bacillus licheniformis (strain ATCC 14580 / DSM 13 / JCM 2505 / CCUG 7422 / NBRC 12200 / NCIMB 9375 / NCTC 10341 / NRRL NRS-1264 / Gibson 46).